We begin with the raw amino-acid sequence, 314 residues long: Malate dehydrogenase (314 aa).

Residues 7–12 (GAGNVG) and Asp32 each bind NAD(+). Residues Arg81 and Arg87 each contribute to the substrate site. Residues Asn94 and 117 to 119 (VAN) contribute to the NAD(+) site. Substrate contacts are provided by Asn119 and Arg150. The Proton acceptor role is filled by His174.

This sequence belongs to the LDH/MDH superfamily. MDH type 3 family.

It catalyses the reaction (S)-malate + NAD(+) = oxaloacetate + NADH + H(+). In terms of biological role, catalyzes the reversible oxidation of malate to oxaloacetate. This Salinibacter ruber (strain DSM 13855 / M31) protein is Malate dehydrogenase.